The following is a 554-amino-acid chain: Arginine--tRNA ligase (554 aa).

The short motif at 130–140 is the 'HIGH' region element; the sequence is ANPTGDLHIGH.

The protein belongs to the class-I aminoacyl-tRNA synthetase family. As to quaternary structure, monomer.

It is found in the cytoplasm. It catalyses the reaction tRNA(Arg) + L-arginine + ATP = L-arginyl-tRNA(Arg) + AMP + diphosphate. The sequence is that of Arginine--tRNA ligase from Staphylococcus carnosus (strain TM300).